Reading from the N-terminus, the 164-residue chain is Inner membrane assembly complex subunit 17 (164 aa).

The N-terminal 28 residues, 1–28 (MIKTAKISTLRLAITRNARNLSFTTLVR), are a transit peptide targeting the mitochondrion. At 29–97 (SPEVDNSKIK…NEVPLKRFTR (69 aa)) the chain is on the mitochondrial matrix side. The helical transmembrane segment at 98–118 (PLWIFILMASTFYLGAHLVWW) threads the bilayer. Over 119–164 (KLAYEKKEVELKHKVDSLETTLKDVMKEKATGPTPCNNKKSWYKFW) the chain is Mitochondrial intermembrane. Residues 121 to 149 (AYEKKEVELKHKVDSLETTLKDVMKEKAT) are a coiled coil.

The protein belongs to the INA17 family. Component of the inner membrane assembly (INA) complex, composed of INA17 and INA22. Interacts with a subset of F(1)F(0)-ATP synthase subunits of the F(1)-domain and the peripheral stalk.

It is found in the mitochondrion inner membrane. Its function is as follows. Component of the INA complex (INAC) that promotes the biogenesis of mitochondrial F(1)F(0)-ATP synthase. INAC facilitates the assembly of the peripheral stalk and promotes the assembly of the catalytic F(1)-domain with the membrane-embedded F(0)-domain. This is Inner membrane assembly complex subunit 17 from Candida glabrata (strain ATCC 2001 / BCRC 20586 / JCM 3761 / NBRC 0622 / NRRL Y-65 / CBS 138) (Yeast).